Consider the following 224-residue polypeptide: Small ribosomal subunit protein uS3 (224 aa).

Residues 38–106 enclose the KH type-2 domain; sequence LREFVKEKLG…EVYLNVVEVR (69 aa).

This sequence belongs to the universal ribosomal protein uS3 family. As to quaternary structure, part of the 30S ribosomal subunit. Forms a tight complex with proteins S10 and S14.

Functionally, binds the lower part of the 30S subunit head. Binds mRNA in the 70S ribosome, positioning it for translation. The sequence is that of Small ribosomal subunit protein uS3 from Anaeromyxobacter dehalogenans (strain 2CP-C).